We begin with the raw amino-acid sequence, 203 residues long: Small ribosomal subunit protein uS4 (203 aa).

The segment at leucine 15 to serine 46 is disordered. Residues glutamine 94–alanine 154 form the S4 RNA-binding domain.

Belongs to the universal ribosomal protein uS4 family. Part of the 30S ribosomal subunit. Contacts protein S5. The interaction surface between S4 and S5 is involved in control of translational fidelity.

In terms of biological role, one of the primary rRNA binding proteins, it binds directly to 16S rRNA where it nucleates assembly of the body of the 30S subunit. Functionally, with S5 and S12 plays an important role in translational accuracy. The protein is Small ribosomal subunit protein uS4 of Novosphingobium aromaticivorans (strain ATCC 700278 / DSM 12444 / CCUG 56034 / CIP 105152 / NBRC 16084 / F199).